The following is a 309-amino-acid chain: MTKTFIFGHKNPDTDAISSALIMADFEQQTGNTEAKAYRLGEISAETQFALDHFNVEAPELLNEDLKGQDVILVDHNEFQQSADTISNATIKHVIDHHRISNFETAGPLYYRAEPVGCSATILYKMYKERGFEIKPEIAGLMISAIISDSLLFKSPTCTKEDVDAAQALKDIANVDLEAYGLEMLKAGASTTDKSAETLVNMDAKSFNMGDYVTRIAQVNTVDIDEVLDRKEEFEKVMLEMSANEKYDLFVLVVTDIINSDSKILVVGAEKDKVGEAFKVQLDDGMAFLSGVVSRKKQVVPQITEVLTQ.

Residues histidine 9, aspartate 13, aspartate 15, aspartate 75, histidine 97, and aspartate 149 each coordinate Mn(2+).

The protein belongs to the PPase class C family. It depends on Mn(2+) as a cofactor.

It is found in the cytoplasm. It catalyses the reaction diphosphate + H2O = 2 phosphate + H(+). The polypeptide is Probable manganese-dependent inorganic pyrophosphatase (Staphylococcus epidermidis (strain ATCC 35984 / DSM 28319 / BCRC 17069 / CCUG 31568 / BM 3577 / RP62A)).